Here is a 316-residue protein sequence, read N- to C-terminus: Transcription initiation factor IIB (316 aa).

The segment at 7–38 (FRLRCPVCGSTDIVFNEETGEYVCARCGTIVL) adopts a TFIIB-type zinc-finger fold. The Zn(2+) site is built by Cys-11, Cys-14, Cys-30, and Cys-33. Residues 51-73 (FTPEERERRGRTGAPLSPTLHDH) form a disordered region. Repeat copies occupy residues 124–207 (NELD…TKEL) and 218–299 (DHIP…EIMK).

It belongs to the TFIIB family.

Its function is as follows. Stabilizes TBP binding to an archaeal box-A promoter. Also responsible for recruiting RNA polymerase II to the pre-initiation complex (DNA-TBP-TFIIB). The sequence is that of Transcription initiation factor IIB from Ignicoccus hospitalis (strain KIN4/I / DSM 18386 / JCM 14125).